The primary structure comprises 247 residues: tRNA (guanine-N(1)-)-methyltransferase (247 aa).

Gly-126 provides a ligand contact to S-adenosyl-L-methionine.

This sequence belongs to the RNA methyltransferase TrmD family. As to quaternary structure, homodimer.

The protein resides in the cytoplasm. The enzyme catalyses guanosine(37) in tRNA + S-adenosyl-L-methionine = N(1)-methylguanosine(37) in tRNA + S-adenosyl-L-homocysteine + H(+). Functionally, specifically methylates guanosine-37 in various tRNAs. In Jannaschia sp. (strain CCS1), this protein is tRNA (guanine-N(1)-)-methyltransferase.